The following is a 399-amino-acid chain: Alpha-ketoglutarate-dependent dioxygenase fc-dox (399 aa).

H158 and D160 together coordinate Fe cation. T203 provides a ligand contact to 2-oxoglutarate. H355 contributes to the Fe cation binding site. 2-oxoglutarate is bound at residue R367. The disordered stretch occupies residues 371–399; the sequence is QGWLAGDRPPKGPVPIPDPRARSSIYYQK.

The protein belongs to the TfdA dioxygenase family. It depends on Fe(2+) as a cofactor.

Its pathway is mycotoxin biosynthesis. In terms of biological role, alpha-ketoglutarate-dependent dioxygenase; part of the 2 gene clusters that mediate the biosynthesis of fusicoccins, diterpene glucosides that display phytohormone-like activity and function as potent activators of plasma membrane H(+)-ATPases in plants by modifying 14-3-3 proteins and cause the plant disease constriction canker. The first step in the pathway is performed by the fusicoccadiene synthase PaFS that possesses both prenyl transferase and terpene cyclase activity, converting isopentenyl diphosphate and dimethylallyl diphosphate into geranylgeranyl diphosphate (GGDP) and successively converting GGDP into fusicocca-2,10(14)-diene, a precursor for fusicoccin H. The second step is the oxidation at the C-8 position by the cytochrome P450 monooxygenase PaP450-2 to yield fusicocca-2,10(14)-diene-8-beta-ol. The cytochrome P450 monooxygenase PaP450-1 then catalyzes the hydroxylation at the C-16 position to produce fusicocca-2,10(14)-diene-8-beta,16-diol. The dioxygenase fc-dox then catalyzes the 16-oxydation of fusicocca-2,10(14)-diene-8-beta,16-diol to yield an aldehyde (8-beta-hydroxyfusicocca-1,10(14)-dien-16-al). The short-chain dehydrogenase/reductase fc-sdr catalyzes the reduction of the aldehyde to yield fusicocca-1,10(14)-diene-8-beta,16-diol. The next step is the hydroxylation at C-9 performed by the cytochrome P450 monooxygenase PaP450-3 that leads to fusicoccin H aglycon which is glycosylated to fusicoccin H by the O-glycosyltransferase PaGT. Hydroxylation at C-12 by the cytochrome P450 monooxygenase PaP450-4 leads then to the production of fusicoccin Q and is followed by methylation by the O-methyltransferase PaMT to yield fusicoccin P. Fusicoccin P is further converted to fusicoccin J via prenylation by the O-glucose prenyltransferase PaPT. Cytochrome P450 monooxygenase PaP450-5 then performs hydroxylation at C-19 to yield dideacetyl-fusicoccin A which is acetylated to 3'-O-deacetyl-fusicoccin A by the O-acetyltransferase PaAT-2. Finally, a another acetylation by the O-acetyltransferase PaAT-1 yields fusicoccin A. The polypeptide is Alpha-ketoglutarate-dependent dioxygenase fc-dox (Phomopsis amygdali (Fusicoccum amygdali)).